Here is a 946-residue protein sequence, read N- to C-terminus: MFDKNKKVSVFAAYRGSATSKNYVQKGTKNFDKNGAAKNNNRNLASKNGGKLKGPLKRSGSYSDGDNGSSSSSGEDEEDDSTDSRGELYDSSESGEEYTLNNHSSQSSPETPAYTRESLKRRNDEAEGSKPIGAKRTSSTPVGQKDEEDDSTDSNGELYDSSESGEEYTLNSHSSQSSPETPANTRESLKRRTDEAEGSKPIGAKRTSSTPVGQKDEEDDSTDSSGELYDSSESGEEYTLNSHSYQSSPETPANTRESLKRRTDEAEGSKPIGAKRTSSTPVGQKDEEDDSTDSSGELYDSSESGEEYTLNSHSSQSSPETPANTRESLNRRNYEAEGSKPIGAKRTSSTPVGQKDEEDDSTDSSGELYDSSESGEEYTLNSHSSQSSPETPANTRESLNRRNYEAEGSKPIGAKRTSSTPVGQSTSAASKKNTVPVKVEVASPNRALLSPQSIEMEPGDSMFCRIKIGVIKSVQPGGDVGAEAGAGQAVNRLEPCHEVHKENSIEVGKRTLAQLIAPMTMATFLRDHWEKSPFRVITTTSGGFSNLISFKMIDKMLIQNHVEYTTNIDVTSYEDGVRKTLNPDGRALPPSVWAHYQRGCSIRILNPSSYLVQLRQLCVKLQEFFHCLVGANVYLTPPESQGFAPHYDDIEAFVLQVEGKKRWRIYAPTKELPRESSGNLSQTELGDPIMDIVLMPGDLLYFPRGWIHQAITEKDSHSLHITLSAYQQQSYANLMEKLMPLVVKESVEQTLKLRKGLPLDIFQNLGVANAEWNGVHRQKLIQHIQNLAQRLMPTEGQIDRALDQLAIKFQHEALPPTIAPQELKRTVYGAQATADKTGHCSLDYELAEGTAVRLLRANIVRLTVDEGVLRCYYYTDNGLEYCKYEPNFFELEPFHGTVIETLIHAYPDYTKIKDLPPMGNDEDRLEFVEALWERGILMVEKPFKKV.

The segment at 14–435 (YRGSATSKNY…TSAASKKNTV (422 aa)) is disordered. 2 stretches are compositionally biased toward polar residues: residues 17–28 (SATSKNYVQKGT) and 37–46 (AKNNNRNLAS). The segment covering 59–73 (SGSYSDGDNGSSSSS) has biased composition (low complexity). Residues 99-110 (TLNNHSSQSSPE) are compositionally biased toward polar residues. Residues 117–128 (ESLKRRNDEAEG) are compositionally biased toward basic and acidic residues. Over residues 169 to 186 (TLNSHSSQSSPETPANTR) the composition is skewed to polar residues. The span at 187-198 (ESLKRRTDEAEG) shows a compositional bias: basic and acidic residues. A compositionally biased stretch (polar residues) spans 239-256 (TLNSHSYQSSPETPANTR). Residues 257–268 (ESLKRRTDEAEG) are compositionally biased toward basic and acidic residues. Residue Thr309 is modified to Phosphothreonine. Residues 309–327 (TLNSHSSQSSPETPANTRE) show a composition bias toward polar residues. Over residues 328–338 (SLNRRNYEAEG) the composition is skewed to basic and acidic residues. At Ser339 the chain carries Phosphoserine. The segment covering 379–397 (TLNSHSSQSSPETPANTRE) has biased composition (polar residues). Residues 398 to 408 (SLNRRNYEAEG) are compositionally biased toward basic and acidic residues. The span at 416 to 433 (RTSSTPVGQSTSAASKKN) shows a compositional bias: polar residues. A JmjC domain is found at 606 to 742 (NPSSYLVQLR…NLMEKLMPLV (137 aa)). Residues His646, Asp648, and His708 each coordinate Fe cation.

Belongs to the ROX family. NO66 subfamily. Fe(2+) is required as a cofactor.

It is found in the nucleus. The enzyme catalyses N(6),N(6)-dimethyl-L-lysyl(36)-[histone H3] + 2 2-oxoglutarate + 2 O2 = L-lysyl(36)-[histone H3] + 2 formaldehyde + 2 succinate + 2 CO2. Oxygenase that can act as both a histone lysine demethylase and a ribosomal histidine hydroxylase. Specifically demethylates 'Lys-4' (H3K4me) and 'Lys-36' (H3K36me) of histone H3, thereby playing a central role in histone code. This is Bifunctional lysine-specific demethylase and histidyl-hydroxylase NO66 from Drosophila pseudoobscura pseudoobscura (Fruit fly).